A 153-amino-acid chain; its full sequence is Pheromone-binding protein Gp-9 (153 aa).

A signal peptide spans 1–19 (MKTFVLHIFIFALVAFASA). Disulfide bonds link Cys37/Cys77, Cys73/Cys129, and Cys118/Cys138.

The protein belongs to the PBP/GOBP family. Homodimer.

Its subcellular location is the secreted. Colony queen number, a major feature of social organization, is associated with worker genotype for Gp-9. Colonies are headed by either a single reproductive queen (monogyne form) or multiple queens (polygyne form). Differences in worker Gp-9 genotypes between social forms may cause differences in workers' abilities to recognize queens and regulate their numbers. In Solenopsis invicta (Red imported fire ant), this protein is Pheromone-binding protein Gp-9.